The primary structure comprises 2611 residues: MGSTHNEWESEPIAIIGLSCKFAGDASNPEKLWDMLAEGRNAWSEVPSSRFNPKAVYHPDSEKLSTTHVKGAHFIDEDIGLFDAAFFNFSAETAAIAGSNTSVYAGVFTHDYHEGLIRDEDRLPRFLPIGTLSAMSSNRISHFFDLKGASMTVDTGCSTALVALHQAVLGLRTGEADMSIVSGCNLMLSPDMFKVFSSLGMLSPDGKSYAFDSRANGYGRGEGVASIVIKRLKDAVEAGDPVRAVIRESFLNQDGKTETITSPSQAAQEALIRECYRRAGLSPHDTQYFEAHGTGTPTGDPIEARSIAAVFGQDRSEPLRIGSVKTNIGHTEAASGLAGLIKVVLAMEKGQIPPSVNFQKPNPKLQLDEWRLKVATELEPWPAASDQPWRASVNNFGYGGTNSHVIVEGVGSLASLLPRKQLTNGIHHAVDSKADVKTQSKVLVFSGRDEQACQRMVSNTKEYLERRKLQDPGMTADKINELMQNLAWTLTQHRSRFAWVSAHAVKYSDNLDQVIQGLDAPQFKPVKVATTPARIGMVFTGQGAQWHAMARELIDPYPVFRSSLYEAERYLRDIGADWSLTAELMRDAATTRVNDTGLSIPICVAVQIALVRLLRSWGIVPSAVTSHSSGEIAAAYTVGALTLRQAMAVAYYRAAMAADKTLRGADGGPKGAMVAVGVGKEAAEGYLHKLPSTSGKAVVACINSPSSITIAGDEAAVQEVEALATADGVFARRLKVDTGYHSHHMDPVAEPYRQALRTALAQKDSDEGQALPDKVDGEPWAGAYRAALHEALPDAIEKGSLDSIIFSSPVTGGRVTRAEVLADPEHWVRSLVQPVRFVEAFTDMTVGGNGEQERSNVDVILEVGPHTALGGPIKEILSLPEFEGITLPYMGCLVRKEDARDCMLAAAVNLLGKGQPANLTRINFPWGLQGPAKPRVLTDMPSYPWNHSNRHWNESRRNQAYRQRSQEPHDLLGVLVPGTNPDAASWRHIVRLSEAPWLRDHVVQGNILYPGAGFVCLAIEAIKMQTAMASATPDAGELAGFKLRDVEIHQALVIADTADGVEVQTILRPVDGKTIGARGWKQFEIWSVTADSEWTEHARGLITVQMAADTAKTNATSHSSASFLDESGYTRRIDPQDMFASLRAKGLNHGPMFQNTVSILQDGRAKEPRCVVTIKVADTSSPKDKGRDLQNVLHPTTLDSIVLSSYAAVPSADPSNDDSARVPRSIRKLWVSNRISNTPGHVFTCNVKMPHHDAQSYEANVSVLDQDGTSEVEPLLEMQGLVCQSLGRSAPGEDKEPWNKELCANVEWGPDLALSLGLPGAQDAIDKRLNTLRDEVAGTDSRSIEVQTVLRRVCVYFSHDALEALTETDVANLASHHVKFYKWMKDTVSLAASRRWSAESDTWTSDPPAVRQHYIDLAAKQSVDGELICHLGPLLLPILRGERAPLEVMMEDRLLYKYYANAYRLEPAFGQLKSLLAAVLHKNPRARVLEIGAGTGAATRHALKTLGTDEDGGPRCESWHFTDISSGFFEAARTEFSAWGNLLEFDRLDIEQSPEAQGFKLASYDVVVACQVLHATKSMARTMSNVRSLMKPGATLLLMETTQDQIDLQFIFGLLPGWWLSEEPERHSSPSLSIGMWDRVLKGAGFTGVEIDLRDVNVDAESDLYGISNILSTAASPSPELDSSRVVIVTSDKAPPQSGWLETLRKSIAQVAGNRVLPDVLALESPGLTAATYTGKLCVFVGELDKPVLAGLDAADLQGLKTMALGCKGLLWITRGGAVECTDPESALASGFVRVLRTEYLGRRFLTLDLDPRTAEMDTAAIVQVLKSCLAASDAPAPIESEFAVRDGLILVPRLYKDVVWNALLEPEVPDWASPETIPEGPLFQPKRPLRLEVGIPGLLDTLAFGDDDGVAADLPDDMVEIEPRAYGLNFRDVMVAMGQLRERVMGLECAGIITRVGSEAAAQGFAVGDHVMALLLGPFSSRPRITWHGVINMPQGMSFSDAASIPMIFTTAYVALVQVARLRHGQSVLIHAAAGGVGQAAVMLAQDYLGAEVYATVGSQEKRDLLTREYGIPPERIFNSRDASFAPAVLAATGGRGVDAVLNSLGGSLLQASFEVLAPFGNFVEIGKRDLEQNSLLEMATFTRAVSFTSLDMMTLLRQRGPEAHRILSELARLAGQKIIKPVHPVTVYPMGQVDKAFRLLQTGKHLGKLVLSTEPEEQVKVLPRPATPKLRSDASYLLVGGVGGLGRSLANWMVDHGARNLILLSRSAGKQDTSAFVAQLREAGSRVAAISCDVSDKEDLAKALRICEHDLHFPPVRGVIQGAMVLQDSILEQMTIDDWQAAIRPKVAGTWNLHERFSQRGSLDFFVMLSSLSCILGWASQASYAAGGTYQDALARWRCASGLPAVSLDMGVIKDVGYVAESRTVSDRLRKVGQSLRLSEESVLQTLATAVLHPFGRPQVLLGLNSGPGSHWDPASDSQMGRDARFMPLRYRKPAASRAQAQQAGGDSDSEPLSAKLRTAESSDAAARCVGDAIATKLADIFMVPVDDIDLSKPPSAYGVDSLVAVELRNMLVLQAACDVSIFSILQSASLAALALDVVAKSAHVEIAA.

The Ketosynthase family 3 (KS3) domain maps to 10 to 409 (SEPIAIIGLS…GTNSHVIVEG (400 aa)). Catalysis depends on for beta-ketoacyl synthase activity residues Cys-157, His-292, and His-330. A malonyl-CoA:ACP transacylase (MAT) domain region spans residues 537 to 844 (MVFTGQGAQW…VRFVEAFTDM (308 aa)). Residues 969 to 1109 (HDLLGVLVPG…GLITVQMAAD (141 aa)) form an N-terminal hotdog fold region. The 324-residue stretch at 969–1292 (HDLLGVLVPG…CQSLGRSAPG (324 aa)) folds into the PKS/mFAS DH domain. The segment at 970-1289 (DLLGVLVPGT…GLVCQSLGRS (320 aa)) is dehydratase (DH) domain. Residue His-1001 is the Proton acceptor; for dehydratase activity of the active site. The tract at residues 1128–1292 (GYTRRIDPQD…CQSLGRSAPG (165 aa)) is C-terminal hotdog fold. The Proton donor; for dehydratase activity role is filled by Asp-1199. Positions 1469-1602 (FGQLKSLLAA…GATLLLMETT (134 aa)) are methyltransferase (CMet) domain. An enoyl reductase (ER) domain region spans residues 1898–2213 (GLLDTLAFGD…TGKHLGKLVL (316 aa)). The segment at 2236 to 2416 (ASYLLVGGVG…AVSLDMGVIK (181 aa)) is ketoreductase (KR) domain. A compositionally biased stretch (low complexity) spans 2499–2509 (SRAQAQQAGGD). The segment at 2499 to 2520 (SRAQAQQAGGDSDSEPLSAKLR) is disordered. The Carrier domain occupies 2527–2604 (AAARCVGDAI…ALALDVVAKS (78 aa)). Ser-2564 carries the O-(pantetheine 4'-phosphoryl)serine modification.

It participates in secondary metabolite biosynthesis. Functionally, highly reducing polyketide synthase; part of the cluster B that mediates the biosynthesis of azasperpyranones, members of the azaphilone family that exhibit anti-cancer activities. Azasperpyranones are synthesized by 2 clusters, A and B. Cluster A is responsible for the production of the polyhydric phenol moiety while the azaphilonoid scaffold is produced by the cluster B. The non-reducing polyketide synthase ATEG_03629 produces 5-methyl orsellinic acid, which is then reduced to 5-methyl orsellinic aldehyde by the NRPS-like protein ATEG_03630. 5-methyl orsellinic aldehyde is then first hydroxylated by the FAD-dependent monooxygenase ATEG_03635 and subsequently hydroxylated by the cytochrome P450 monooxygenase ATEG_03631 to produce the unstable polyhydric phenol precursor of azasperpyranones. On the other hand, the polyketide synthase ATEG_07659 is responsible for producing the 3,5-dimethyloctadienone moiety from acetyl-CoA, three malonyl-CoA, and two S-adenosyl methionines (SAM). The 3,5-dimethyloctadienone moiety is then loaded onto the SAT domain of ATEG_07661 and extended with four malonyl-CoA and one SAM, which leads to the formation of 2,4-dihydroxy-6-(5,7-dimethyl-2-oxo-trans-3-trans-5-nonadienyl)-3-methylbenzaldehyde (compound 8) after reductive release and aldol condensation. The FAD-dependent monooxygenase ATEG_07662 is the next enzyme in the biosynthesis sequence and hydroxylates the side chain at the benzylic position of compound 8. In Aspergillus nidulans, afoF, the ortholog of the FAD-dependent oxygenase ATEG_07660, is the key enzyme for the biosynthesis of asperfuranone by catalyzing the hydroxylation at C-8 of to prevent the formation of a six-membered ring hemiacetal intermediate and thus facilitating the formation of a five-membered ring to produce asperfuranone. In Aspergillus terreus, ATEG_07660 is probably not functional, which leads to the formation of the six-membered ring hemiacetal intermediate presperpyranone instead of asperfuranone. Finally, ATEG_03636 is involved in the condensation of the polyhydric phenol moiety produced by cluster A and the perasperpyranone precursor produced by cluster B, to yield azasperpyranone A. Further modifications of azasperpyranone A result in the production of derivatives, including azasperpyranone B to F. The protein is Highly reducing polyketide synthase ATEG_07659 of Aspergillus terreus (strain NIH 2624 / FGSC A1156).